Reading from the N-terminus, the 504-residue chain is Cytochrome P450 7A1 (504 aa).

Residues 4–24 (TSLIWGIAIAACCCLWLILGI) form a helical membrane-spanning segment. A heme-binding site is contributed by Cys444.

This sequence belongs to the cytochrome P450 family. Requires heme as cofactor. In terms of tissue distribution, detected in liver.

The protein resides in the endoplasmic reticulum membrane. The protein localises to the microsome membrane. The enzyme catalyses cholesterol + reduced [NADPH--hemoprotein reductase] + O2 = 7alpha-hydroxycholesterol + oxidized [NADPH--hemoprotein reductase] + H2O + H(+). The catalysed reaction is 4beta-hydroxycholesterol + reduced [NADPH--hemoprotein reductase] + O2 = 4beta,7alpha-dihydroxycholesterol + oxidized [NADPH--hemoprotein reductase] + H2O + H(+). It catalyses the reaction lathosterol + reduced [NADPH--hemoprotein reductase] + O2 = 7alpha,8alpha-epoxy-5alpha-cholestan-3beta-ol + oxidized [NADPH--hemoprotein reductase] + H2O + H(+). It carries out the reaction lathosterol + reduced [NADPH--hemoprotein reductase] + O2 = 5alpha-cholestan-7-oxo-3beta-ol + oxidized [NADPH--hemoprotein reductase] + H2O + H(+). The enzyme catalyses 7-dehydrocholesterol + reduced [NADPH--hemoprotein reductase] + O2 = 7-oxocholesterol + oxidized [NADPH--hemoprotein reductase] + H2O + H(+). The catalysed reaction is (24S)-hydroxycholesterol + reduced [NADPH--hemoprotein reductase] + O2 = (24S)-7alpha-dihydroxycholesterol + oxidized [NADPH--hemoprotein reductase] + H2O + H(+). It catalyses the reaction (24R)-hydroxycholesterol + reduced [NADPH--hemoprotein reductase] + O2 = (24R)-7alpha-dihydroxycholesterol + oxidized [NADPH--hemoprotein reductase] + H2O + H(+). The protein operates within lipid metabolism; bile acid biosynthesis. Its pathway is steroid metabolism; cholesterol degradation. Functionally, a cytochrome P450 monooxygenase involved in the metabolism of endogenous cholesterol and its oxygenated derivatives (oxysterols). Mechanistically, uses molecular oxygen inserting one oxygen atom into a substrate, and reducing the second into a water molecule, with two electrons provided by NADPH via cytochrome P450 reductase (CPR; NADPH-ferrihemoprotein reductase). Functions as a critical regulatory enzyme of bile acid biosynthesis and cholesterol homeostasis. Catalyzes the hydroxylation of carbon hydrogen bond at 7-alpha position of cholesterol, a rate-limiting step in cholesterol catabolism and bile acid biosynthesis. 7-alpha hydroxylates several oxysterols, including 4beta-hydroxycholesterol and 24-hydroxycholesterol. Catalyzes the oxidation of the 7,8 double bond of 7-dehydrocholesterol and lathosterol with direct and predominant formation of the 7-keto derivatives. The chain is Cytochrome P450 7A1 from Homo sapiens (Human).